The primary structure comprises 1082 residues: Transcription elongation factor SPT5 (1082 aa).

The segment covering 1-28 has biased composition (acidic residues); it reads MSDSEDSNFSEEEDSERSSEAEEAEVEE. The tract at residues 1 to 88 is disordered; the sequence is MSDSEDSNFS…DVDDEYEDED (88 aa). Phosphoserine occurs at positions 32 and 36. 2 stretches are compositionally biased toward acidic residues: residues 38–62 and 76–88; these read KEEE…EDDD and DEAD…EDED. A Glycyl lysine isopeptide (Lys-Gly) (interchain with G-Cter in SUMO2) cross-link involves residue lysine 141. Residues 174 to 268 are interaction with SUPT4H1 and SUPT4H2; the sequence is DPNLWTVKCK…TDVLKVVKEV (95 aa). The KOW 1 domain maps to 271 to 304; that stretch reads LKPKSWVRLKRGIYKDDIAQVDYVEPSQNTISLK. The tract at residues 311-418 is interaction with RNA polymerase II; that stretch reads YDRIKARMSL…STGKEREHNF (108 aa). A UBR5-degron motif is present at residues 326 to 332; it reads KRKKFKR. 2 KOW domains span residues 418-449 and 470-501; these read FQPG…ITIM and FKMG…VILF. Residue lysine 577 coordinates RNA. The KOW 4 domain occupies 592-625; the sequence is IHVKDIVKVIDGPHSGREGEIRHLYRSFAFLHCK. Arginine 617 lines the DNA pocket. Threonine 661 bears the Phosphothreonine mark. Phosphoserine is present on residues serine 664 and serine 684. Residues 669–694 are disordered; that stretch reads SPMHPSAEGQHGGFGSPGGMSRGRGR. The span at 678 to 690 shows a compositional bias: gly residues; the sequence is QHGGFGSPGGMSR. Residues arginine 690 and arginine 692 each carry the asymmetric dimethylarginine; alternate modification. Arginine 690 and arginine 692 each carry omega-N-methylarginine; alternate. Arginine 692 is modified (symmetric dimethylarginine; alternate). Residues 698 to 731 form the KOW 5 domain; sequence ELIGQTVRISQGPYKGYIGVVKDATESTARVELH. At lysine 712 the chain carries N6-acetyllysine. Over residues 741–801 the composition is skewed to polar residues; that stretch reads RQRLTTVDSQ…RTPHYGSQTP (61 aa). Residues 741–972 are disordered; sequence RQRLTTVDSQ…GSGIEQNSSD (232 aa). One copy of the CTR1-1; approximate repeat lies at 748 to 753; sequence DSQRPG. The tract at residues 748–811 is 9 X 7 AA approximate tandem repeats of G-S-[QR]-T-P-X-[YQ], motif CTR1; it reads DSQRPGGMTS…LHDGSRTPAQ (64 aa). A CTR1-2 repeat occupies 754 to 759; the sequence is GMTSTY. The stretch at 760–765 is one CTR1-3 repeat; it reads GRTPMY. Residues 766–772 form a CTR1-4 repeat; the sequence is GSQTPMY. Phosphothreonine; by CDK9 occurs at positions 769 and 778. A CTR1-5 repeat occupies 775–781; that stretch reads GSRTPMY. One copy of the CTR1-6 repeat lies at 782-788; it reads GSQTPLQ. Residue serine 783 is modified to Phosphoserine. A phosphothreonine mark is found at threonine 785 and threonine 793. The stretch at 790–796 is one CTR1-7 repeat; the sequence is GSRTPHY. Residues 797–803 form a CTR1-8 repeat; it reads GSQTPLH. Residue serine 798 is modified to Phosphoserine. Residues threonine 800 and threonine 808 each carry the phosphothreonine modification. A CTR1-9 repeat occupies 805 to 811; it reads GSRTPAQ. Residues 828–838 are compositionally biased toward acidic residues; sequence EEYEYAFDDEP. One copy of the CTR2-1 repeat lies at 838 to 845; sequence PTPSPQAY. The segment at 838 to 944 is 10 X 8 AA approximate tandem repeats of P-[TS]-P-S-P-[QA]-[SG]-Y, motif CTR2; that stretch reads PTPSPQAYGG…ASPSPSPVGY (107 aa). Residues 848 to 856 form a CTR2-2; approximate repeat; it reads TPNPQTPGY. Pro residues predominate over residues 851-860; the sequence is PQTPGYPDPS. One copy of the CTR2-3; approximate repeat lies at 857 to 863; the sequence is PDPSSPQ. Polar residues predominate over residues 861–884; the sequence is SPQVNPQYNPQTPGTPAMYNTDQF. The stretch at 875 to 879 is one CTR2-4; half-length repeat; it reads TPAMY. One copy of the CTR2-5; approximate repeat lies at 890-896; it reads PSPQGSY. Positions 890 to 905 are enriched in low complexity; it reads PSPQGSYQPSPSPQSY. The stretch at 898–905 is one CTR2-6 repeat; sequence PSPSPQSY. The stretch at 910–915 is one CTR2-7; approximate repeat; the sequence is PSPAGY. Residues 918–924 form a CTR2-8 repeat; sequence THSPASY. Residues 926–933 form a CTR2-9 repeat; it reads PTPSPMAY. The CTR2-10 repeat unit spans residues 937–944; sequence PSPSPVGY. Phosphothreonine is present on threonine 1028. Lysine 1031 is covalently cross-linked (Glycyl lysine isopeptide (Lys-Gly) (interchain with G-Cter in SUMO2)).

Belongs to the SPT5 family. In terms of assembly, interacts with SUPT4H1 to form DSIF. DSIF interacts with the positive transcription elongation factor b complex (P-TEFb complex), which is composed of CDK9 and cyclin-T (CCNT1 or CCNT2). DSIF interacts with RNA polymerase II, and this interaction is reduced by phosphorylation of the C-terminal domain (CTD) of POLR2A by P-TEFb. DSIF also interacts with the NELF complex, which is composed of NELFA, NELFB, NELFD and NELFE, and this interaction occurs following prior binding of DSIF to RNA polymerase II. Also interacts with PRMT1/HRMT1L2, HTATSF1/TATSF1, RNGTT/CAP1A, PRMT5/SKB1, SUPT6H, and can interact with PIN1. Component of a complex which is at least composed of HTATSF1/Tat-SF1, the P-TEFb complex components CDK9 and CCNT1, RNA polymerase II, SUPT5H, and NCL/nucleolin. Interacts with MCM3AP. In terms of processing, methylated by PRMT1/HRMT1L2 and PRMT5/SKB1. Methylation negatively regulates interaction with P-TEFb and RNA polymerase II. Post-translationally, phosphorylated by CDK7 and CDK9. Phosphorylation by P-TEFb (CDK9) at Thr residues of the C-terminal repeats alleviates transcriptional pausing and promotes transcription elongation. Dephosphorylated by the INTAC complex when transcripts are unfavorably configured for transcriptional elongation, leading to premature transcription termination: dephosphorylation is mediated by the PPP2CA component of the INTAC complex. Dephosphorylated by the PNUTS-PP1 complex in termination zones downstream of poly(A) sites, thereby promoting deceleration of RNA polymerase II transcription. Dephosphorylated by the PNUTS-PP1 complex in termination zones downstream of poly(A) sites, thereby promoting deceleration of RNA polymerase II transcription. Phosphorylation may also stimulate interaction with PIN1. Bulk phosphorylation occurs predominantly in mitosis. Ubiquitinated by UBR5 when not assembled in the DSIF complex, leading to its degradation: UBR5 recognizes and binds a degron that is not accessible when SUPT5H is part of the DSIF complex.

The protein localises to the nucleus. Functionally, component of the DRB sensitivity-inducing factor complex (DSIF complex), which regulates mRNA processing and transcription elongation by RNA polymerase II. DSIF positively regulates mRNA capping by stimulating the mRNA guanylyltransferase activity of RNGTT/CAP1A. DSIF also acts cooperatively with the negative elongation factor complex (NELF complex) to enhance transcriptional pausing at sites proximal to the promoter. Transcriptional pausing may facilitate the assembly of an elongation competent RNA polymerase II complex. DSIF and NELF promote pausing by inhibition of the transcription elongation factor TFIIS/S-II. TFIIS/S-II binds to RNA polymerase II at transcription pause sites and stimulates the weak intrinsic nuclease activity of the enzyme. Cleavage of blocked transcripts by RNA polymerase II promotes the resumption of transcription from the new 3' terminus and may allow repeated attempts at transcription through natural pause sites. Following phosphorylation by CDK9, DSIF can also positively regulate transcriptional elongation. The protein is Transcription elongation factor SPT5 (Supt5h) of Mus musculus (Mouse).